Consider the following 385-residue polypeptide: MAAVVAATALKGRGARNARVLRGILAGATANKASHNRTRALQSHSSPEGKEEPEPLSPELEYIPRKRGKNPMKAVGLAWYSLYTRTWLGYLFYRQQLRRARNRYPKGHSKTQPRLFNGVKVLPIPVLSDNYSYLIIDTQAQLAVAVDPSDPRAVQASIEKEGVTLVAILCTHKHWDHSGGNRDLSRRHRDCRVYGSPQDGIPYLTHPLCHQDVVSVGRLQIRALATPGHTQGHLVYLLDGEPYKGPSCLFSGDLLFLSGCGRTFEGNAETMLSSLDTVLGLGDDTLLWPGHEYAEENLGFAGVVEPENLARERKMQWVQRQRLERKGTCPSTLGEERSYNPFLRTHCLALQEALGPGPGPTGDDDYSRAQLLEELRRLKDMHKSK.

Residues 32-58 form a disordered region; that stretch reads KASHNRTRALQSHSSPEGKEEPEPLSP. Zn(2+) is bound by residues histidine 172, histidine 174, aspartate 176, histidine 177, histidine 229, aspartate 253, and histidine 291.

This sequence belongs to the metallo-beta-lactamase superfamily. Glyoxalase II family. Isoform 2 interacts with the sarcomeric proteins, MRLC2, MYOM1 and ENO3. Requires Zn(2+) as cofactor. Post-translationally, undergoes cleavage at the N-terminus. Isoform 1 is only expressed in the brain. Isoform 2 is ubiquitously detected with highest expression in skeletal muscle and detected in myocardial myofibrils.

It localises to the cell membrane. The protein resides in the mitochondrion. The protein localises to the cytoplasm. Its subcellular location is the golgi apparatus. It is found in the endoplasmic reticulum. It catalyses the reaction a thioester + H2O = a thiol + a carboxylate + H(+). Functionally, probable thioesterase that may play a role in cellular detoxification processes; it likely acts on a yet-unknown alpha-hydroxythioester substrate. In vitro, it is able to catalyze the hydrolysis of S-D-lactoyl-glutathione to form glutathione and D-lactic acid at very low rate, though this reaction is not physiologically relevant in vivo. In Homo sapiens (Human), this protein is Probable thioesterase PNKD (PNKD).